The sequence spans 75 residues: Kappa-conotoxin RIIIK (75 aa).

The signal sequence occupies residues 1–19; that stretch reads MSKLGVLLTICLLLFPLTA. A propeptide spanning residues 20 to 50 is cleaved from the precursor; that stretch reads LPMDGDQPVDRLAERMQDNISSEQHTFFEKR. A 4-hydroxyproline mark is found at proline 52, proline 63, proline 65, and proline 71. 3 disulfide bridges follow: cysteine 54-cysteine 67, cysteine 55-cysteine 72, and cysteine 62-cysteine 73. At threonine 74 the chain carries Threonine amide.

This sequence belongs to the conotoxin M superfamily. In terms of tissue distribution, expressed by the venom duct.

It localises to the secreted. Functionally, kappa-conotoxins inhibits voltage-gated potassium channels (Kv). This synthetic toxin reversibly inhibits the insect potassium channel Shaker K+, the teleost homolog TSha1 and the mammalian Kv1.2/KCNA2 channel. Interacts with the pore region of the insect channel, in a state-dependent manner. Causes seizure when intracerebrovascularly injected into mice. Is also toxic when intrathecally injected into mice, but shows no visible effects by intraperitoneal injection. Shows protective effects on cardiac tissue when administered after an ischemic event. The polypeptide is Kappa-conotoxin RIIIK (Conus radiatus (Rayed cone)).